The following is a 409-amino-acid chain: MSSHPIQVFSEIGKLKKVMLHRPGKELENLLPDYLERLLFDDIPFLEDAQKEHDAFAQALRDEGIEVLYLEQLAAESLTSPEIRDQFIEEYLDEANIRDRQTKVAIRELLHGIKDNQELVEKTMAGIQKVELPEIPDEAKDLTDLVESEYPFAIDPMPNLYFTRDPFATIGNAVSLNHMFADTRNRETLYGKYIFKYHPVYGGKVDLVYNREEDTRIEGGDELVLSKDVLAVGISQRTDAASIEKLLVNIFKKNVGFKKVLAFEFANNRKFMHLDTVFTMVDYDKFTIHPEIEGDLHVYSVTYENEKLKIVEEKGDLAELLAQNLGVEKVHLIRCGGGNIVAAAREQWNDGSNTLTIAPGVVVVYDRNTVTNKILEEYGLRLIKIRGSELVRGRGGPRCMSMPFEREEV.

Cys399 functions as the Amidino-cysteine intermediate in the catalytic mechanism.

Belongs to the arginine deiminase family.

Its subcellular location is the cytoplasm. It catalyses the reaction L-arginine + H2O = L-citrulline + NH4(+). Its pathway is amino-acid degradation; L-arginine degradation via ADI pathway; carbamoyl phosphate from L-arginine: step 1/2. The chain is Arginine deiminase from Streptococcus pneumoniae serotype 19F (strain G54).